Here is a 385-residue protein sequence, read N- to C-terminus: T-box transcription factor TBX10 (385 aa).

Residues 22 to 61 (TTSSGWEPRLGSPFPSGPCTSSTGAQAVAEPTGQGPKNPR) form a disordered region. The T-box DNA-binding region spans 69–252 (LEMKPLWEEF…SNPFAKGFRE (184 aa)).

It is found in the nucleus. Functionally, probable transcriptional regulator involved in developmental processes. The protein is T-box transcription factor TBX10 (TBX10) of Homo sapiens (Human).